Here is a 238-residue protein sequence, read N- to C-terminus: Small ribosomal subunit protein uS2 (238 aa).

It belongs to the universal ribosomal protein uS2 family.

The polypeptide is Small ribosomal subunit protein uS2 (Synechococcus sp. (strain CC9605)).